The chain runs to 194 residues: Segregation and condensation protein B (194 aa).

This sequence belongs to the ScpB family. In terms of assembly, homodimer. Homodimerization may be required to stabilize the binding of ScpA to the Smc head domains. Component of a cohesin-like complex composed of ScpA, ScpB and the Smc homodimer, in which ScpA and ScpB bind to the head domain of Smc. The presence of the three proteins is required for the association of the complex with DNA.

Its subcellular location is the cytoplasm. Participates in chromosomal partition during cell division. May act via the formation of a condensin-like complex containing Smc and ScpA that pull DNA away from mid-cell into both cell halves. This is Segregation and condensation protein B from Brevibacillus brevis (strain 47 / JCM 6285 / NBRC 100599).